The following is a 328-amino-acid chain: Ketol-acid reductoisomerase (NADP(+)) (328 aa).

Residues 2–182 (AKIYRDGDAS…GATRAGVIET (181 aa)) enclose the KARI N-terminal Rossmann domain. NADP(+) contacts are provided by residues 25 to 28 (YGIQ), R48, S53, and 83 to 86 (DMEQ). The active site involves H108. G134 is a binding site for NADP(+). Positions 183–328 (TFAEETETDL…AEMRKLLFGP (146 aa)) constitute a KARI C-terminal knotted domain. Residues D191, E195, E227, and E231 each contribute to the Mg(2+) site. Residue S252 coordinates substrate.

This sequence belongs to the ketol-acid reductoisomerase family. It depends on Mg(2+) as a cofactor.

It carries out the reaction (2R)-2,3-dihydroxy-3-methylbutanoate + NADP(+) = (2S)-2-acetolactate + NADPH + H(+). The enzyme catalyses (2R,3R)-2,3-dihydroxy-3-methylpentanoate + NADP(+) = (S)-2-ethyl-2-hydroxy-3-oxobutanoate + NADPH + H(+). Its pathway is amino-acid biosynthesis; L-isoleucine biosynthesis; L-isoleucine from 2-oxobutanoate: step 2/4. It participates in amino-acid biosynthesis; L-valine biosynthesis; L-valine from pyruvate: step 2/4. Its function is as follows. Involved in the biosynthesis of branched-chain amino acids (BCAA). Catalyzes an alkyl-migration followed by a ketol-acid reduction of (S)-2-acetolactate (S2AL) to yield (R)-2,3-dihydroxy-isovalerate. In the isomerase reaction, S2AL is rearranged via a Mg-dependent methyl migration to produce 3-hydroxy-3-methyl-2-ketobutyrate (HMKB). In the reductase reaction, this 2-ketoacid undergoes a metal-dependent reduction by NADPH to yield (R)-2,3-dihydroxy-isovalerate. The sequence is that of Ketol-acid reductoisomerase (NADP(+)) from Pyrobaculum calidifontis (strain DSM 21063 / JCM 11548 / VA1).